The sequence spans 429 residues: Glutamate-1-semialdehyde 2,1-aminomutase (429 aa).

At lysine 265 the chain carries N6-(pyridoxal phosphate)lysine.

This sequence belongs to the class-III pyridoxal-phosphate-dependent aminotransferase family. HemL subfamily. Homodimer. It depends on pyridoxal 5'-phosphate as a cofactor.

The protein localises to the cytoplasm. The catalysed reaction is (S)-4-amino-5-oxopentanoate = 5-aminolevulinate. It participates in porphyrin-containing compound metabolism; protoporphyrin-IX biosynthesis; 5-aminolevulinate from L-glutamyl-tRNA(Glu): step 2/2. The polypeptide is Glutamate-1-semialdehyde 2,1-aminomutase (Legionella pneumophila (strain Corby)).